Consider the following 396-residue polypeptide: Elongation factor Tu 2 (396 aa).

The tr-type G domain occupies 10–206 (KPHINVGTIG…AMDAHIPQPE (197 aa)). A G1 region spans residues 19–26 (GHVDHGKT). A GTP-binding site is contributed by 19-26 (GHVDHGKT). Thr-26 contacts Mg(2+). Residues 60 to 64 (GITIA) form a G2 region. The interval 81–84 (DCPG) is G3. GTP-binding positions include 81 to 85 (DCPGH) and 136 to 139 (NKAD). Residues 136 to 139 (NKAD) form a G4 region. The tract at residues 174-176 (SAL) is G5.

The protein belongs to the TRAFAC class translation factor GTPase superfamily. Classic translation factor GTPase family. EF-Tu/EF-1A subfamily. In terms of assembly, monomer.

It is found in the cytoplasm. It catalyses the reaction GTP + H2O = GDP + phosphate + H(+). In terms of biological role, GTP hydrolase that promotes the GTP-dependent binding of aminoacyl-tRNA to the A-site of ribosomes during protein biosynthesis. In Halorhodospira halophila (strain DSM 244 / SL1) (Ectothiorhodospira halophila (strain DSM 244 / SL1)), this protein is Elongation factor Tu 2.